Consider the following 276-residue polypeptide: NADPH-dependent 7-cyano-7-deazaguanine reductase (276 aa).

83–85 (IES) serves as a coordination point for substrate. 85 to 86 (SK) lines the NADPH pocket. Cysteine 184 serves as the catalytic Thioimide intermediate. Aspartate 191 acts as the Proton donor in catalysis. Residue 223–224 (HE) coordinates substrate. An NADPH-binding site is contributed by 252–253 (RG).

This sequence belongs to the GTP cyclohydrolase I family. QueF type 2 subfamily. In terms of assembly, homodimer.

Its subcellular location is the cytoplasm. The catalysed reaction is 7-aminomethyl-7-carbaguanine + 2 NADP(+) = 7-cyano-7-deazaguanine + 2 NADPH + 3 H(+). It participates in tRNA modification; tRNA-queuosine biosynthesis. In terms of biological role, catalyzes the NADPH-dependent reduction of 7-cyano-7-deazaguanine (preQ0) to 7-aminomethyl-7-deazaguanine (preQ1). The sequence is that of NADPH-dependent 7-cyano-7-deazaguanine reductase from Pseudomonas fluorescens (strain Pf0-1).